A 338-amino-acid chain; its full sequence is Anthranilate phosphoribosyltransferase (338 aa).

5-phospho-alpha-D-ribose 1-diphosphate contacts are provided by residues Gly80, 83-84 (GD), Thr88, 90-93 (NIST), 108-116 (KHGNRAVSS), and Ser120. An anthranilate-binding site is contributed by Gly80. Ser92 contributes to the Mg(2+) binding site. Asn111 contacts anthranilate. Arg166 contributes to the anthranilate binding site. Mg(2+) contacts are provided by Asp225 and Glu226.

It belongs to the anthranilate phosphoribosyltransferase family. Homodimer. Mg(2+) serves as cofactor.

The enzyme catalyses N-(5-phospho-beta-D-ribosyl)anthranilate + diphosphate = 5-phospho-alpha-D-ribose 1-diphosphate + anthranilate. Its pathway is amino-acid biosynthesis; L-tryptophan biosynthesis; L-tryptophan from chorismate: step 2/5. Its function is as follows. Catalyzes the transfer of the phosphoribosyl group of 5-phosphorylribose-1-pyrophosphate (PRPP) to anthranilate to yield N-(5'-phosphoribosyl)-anthranilate (PRA). This chain is Anthranilate phosphoribosyltransferase, found in Thermoanaerobacter sp. (strain X514).